A 361-amino-acid polypeptide reads, in one-letter code: tRNA-specific 2-thiouridylase MnmA (361 aa).

Residues 9–16 (GMSGGVDS) and M35 contribute to the ATP site. The tract at residues 95–97 (NPD) is interaction with target base in tRNA. Residue C100 is the Nucleophile of the active site. An intrachain disulfide couples C100 to C196. An ATP-binding site is contributed by G124. The segment at 146-148 (KDQ) is interaction with tRNA. Catalysis depends on C196, which acts as the Cysteine persulfide intermediate. An interaction with tRNA region spans residues 308–309 (RY).

It belongs to the MnmA/TRMU family.

It localises to the cytoplasm. The enzyme catalyses S-sulfanyl-L-cysteinyl-[protein] + uridine(34) in tRNA + AH2 + ATP = 2-thiouridine(34) in tRNA + L-cysteinyl-[protein] + A + AMP + diphosphate + H(+). In terms of biological role, catalyzes the 2-thiolation of uridine at the wobble position (U34) of tRNA, leading to the formation of s(2)U34. The chain is tRNA-specific 2-thiouridylase MnmA from Nitrosomonas eutropha (strain DSM 101675 / C91 / Nm57).